The following is a 283-amino-acid chain: Elongation factor Ts (283 aa).

The tract at residues Thr80–Val83 is involved in Mg(2+) ion dislocation from EF-Tu.

This sequence belongs to the EF-Ts family.

The protein localises to the cytoplasm. Functionally, associates with the EF-Tu.GDP complex and induces the exchange of GDP to GTP. It remains bound to the aminoacyl-tRNA.EF-Tu.GTP complex up to the GTP hydrolysis stage on the ribosome. The polypeptide is Elongation factor Ts (Haemophilus influenzae (strain PittGG)).